A 187-amino-acid polypeptide reads, in one-letter code: MGKKSSKLKQDTIDRLTTDTYFTEKEIRQWHKGFLKDCPNGLLTEQGFIKIYKQFFPQGDPSKFASLVFRVFDENNDGSIEFEEFIRALSVTSKGNLDEKLQWAFRLYDVDNDGYITREEMYNIVDAIYQMVGQQPQSEDENTPQKRVDKIFDQMDKNHDGKLTLEEFREGSKADPRIVQALSLGGG.

A lipid anchor (N-myristoyl glycine) is attached at G2. EF-hand domains are found at residues 24 to 59 (EKEIRQWHKGFLKDCPNGLLTEQGFIKIYKQFFPQG), 60 to 95 (DPSKFASLVFRVFDENNDGSIEFEEFIRALSVTSKG), 96 to 131 (NLDEKLQWAFRLYDVDNDGYITREEMYNIVDAIYQM), and 143 to 178 (TPQKRVDKIFDQMDKNHDGKLTLEEFREGSKADPRI). Positions 73, 75, 77, 79, 84, 109, 111, 113, 115, 120, 156, 158, 160, 162, and 167 each coordinate Ca(2+).

Belongs to the recoverin family. In contrast to Frq2, does not interact with ric8a. In terms of tissue distribution, enriched in synapses, such as the motor nerve endings at neuromuscular junctions. In the embryo, highly expressed in the ventral ganglia.

The protein resides in the cytoplasm. Its function is as follows. Ca(2+)-dependent modulation of synaptic efficacy. Also plays a role in axon terminal morphology. The chain is Frequenin-1 (Frq1) from Drosophila melanogaster (Fruit fly).